The chain runs to 242 residues: uncharacterized protein (242 aa).

A run of 2 helical transmembrane segments spans residues 4-24 (NYQV…YYVV) and 34-54 (LLFG…WLFG). The N-linked (GlcNAc...) asparagine; by host glycan is linked to Asn-73. 3 helical membrane passes run 74-94 (YTIV…VIGY), 106-126 (VLTV…YGGF), and 162-182 (LDVF…FVMY). Residue Asn-185 is glycosylated (N-linked (GlcNAc...) asparagine; by host). 2 helical membrane-spanning segments follow: residues 189-209 (VIGL…APTL) and 217-237 (CLLS…STGI).

The protein localises to the membrane. This is an uncharacterized protein from Acanthamoeba polyphaga mimivirus (APMV).